Consider the following 428-residue polypeptide: Enolase (428 aa).

Q163 lines the (2R)-2-phosphoglycerate pocket. Catalysis depends on E205, which acts as the Proton donor. D242, E286, and D313 together coordinate Mg(2+). Positions 338, 367, 368, and 389 each coordinate (2R)-2-phosphoglycerate. K338 functions as the Proton acceptor in the catalytic mechanism.

Belongs to the enolase family. The cofactor is Mg(2+).

It is found in the cytoplasm. The protein localises to the secreted. Its subcellular location is the cell surface. It carries out the reaction (2R)-2-phosphoglycerate = phosphoenolpyruvate + H2O. Its pathway is carbohydrate degradation; glycolysis; pyruvate from D-glyceraldehyde 3-phosphate: step 4/5. In terms of biological role, catalyzes the reversible conversion of 2-phosphoglycerate (2-PG) into phosphoenolpyruvate (PEP). It is essential for the degradation of carbohydrates via glycolysis. This Geobacter sulfurreducens (strain ATCC 51573 / DSM 12127 / PCA) protein is Enolase.